The chain runs to 62 residues: Photosystem II reaction center protein Z (62 aa).

2 helical membrane-spanning segments follow: residues 8–28 (AVFA…VVFS) and 41–61 (FSGT…NSLI).

The protein belongs to the PsbZ family. PSII is composed of 1 copy each of membrane proteins PsbA, PsbB, PsbC, PsbD, PsbE, PsbF, PsbH, PsbI, PsbJ, PsbK, PsbL, PsbM, PsbT, PsbY, PsbZ, Psb30/Ycf12, at least 3 peripheral proteins of the oxygen-evolving complex and a large number of cofactors. It forms dimeric complexes.

The protein resides in the plastid. The protein localises to the chloroplast thylakoid membrane. May control the interaction of photosystem II (PSII) cores with the light-harvesting antenna, regulates electron flow through the 2 photosystem reaction centers. PSII is a light-driven water plastoquinone oxidoreductase, using light energy to abstract electrons from H(2)O, generating a proton gradient subsequently used for ATP formation. This is Photosystem II reaction center protein Z from Populus alba (White poplar).